Here is a 319-residue protein sequence, read N- to C-terminus: Ribosomal RNA small subunit methyltransferase H (319 aa).

Residues 37-39 (GGY), Asp57, Phe96, Asp105, and Gln112 each bind S-adenosyl-L-methionine. A compositionally biased stretch (basic and acidic residues) spans 292 to 302 (RPDEREKERNP). The segment at 292–319 (RPDEREKERNPRSRSARLRAVEKQGVPA) is disordered.

It belongs to the methyltransferase superfamily. RsmH family.

The protein resides in the cytoplasm. It catalyses the reaction cytidine(1402) in 16S rRNA + S-adenosyl-L-methionine = N(4)-methylcytidine(1402) in 16S rRNA + S-adenosyl-L-homocysteine + H(+). In terms of biological role, specifically methylates the N4 position of cytidine in position 1402 (C1402) of 16S rRNA. This is Ribosomal RNA small subunit methyltransferase H from Syntrophobacter fumaroxidans (strain DSM 10017 / MPOB).